A 469-amino-acid chain; its full sequence is Glutamate--tRNA ligase (469 aa).

Positions 9-19 (PSPTGFLHVGG) match the 'HIGH' region motif. Positions 236-240 (KLSKR) match the 'KMSKS' region motif. Lys239 is an ATP binding site.

This sequence belongs to the class-I aminoacyl-tRNA synthetase family. Glutamate--tRNA ligase type 1 subfamily. As to quaternary structure, monomer.

It localises to the cytoplasm. The enzyme catalyses tRNA(Glu) + L-glutamate + ATP = L-glutamyl-tRNA(Glu) + AMP + diphosphate. In terms of biological role, catalyzes the attachment of glutamate to tRNA(Glu) in a two-step reaction: glutamate is first activated by ATP to form Glu-AMP and then transferred to the acceptor end of tRNA(Glu). This is Glutamate--tRNA ligase from Shewanella frigidimarina (strain NCIMB 400).